We begin with the raw amino-acid sequence, 791 residues long: Probable phosphoketolase (791 aa).

The protein belongs to the XFP family. Thiamine diphosphate is required as a cofactor.

The sequence is that of Probable phosphoketolase from Pseudomonas putida (strain ATCC 700007 / DSM 6899 / JCM 31910 / BCRC 17059 / LMG 24140 / F1).